A 930-amino-acid chain; its full sequence is A disintegrin and metalloproteinase with thrombospondin motifs 5 (930 aa).

Positions 1-16 (MLLGWASLLLCAFRLP) are cleaved as a signal peptide. Residues 17–261 (LAAVGPAATP…PQTWWRRRRR (245 aa)) constitute a propeptide that is removed on maturation. Disordered regions lie at residues 24–69 (ATPA…QRRR) and 206–231 (RASC…PSGR). The span at 31 to 42 (AGQPPTAAAAAQ) shows a compositional bias: low complexity. The segment covering 46 to 59 (RQGEEVQERAEPPG) has biased composition (basic and acidic residues). A Cysteine switch motif is present at residues 207–214 (ASCETPAS). C209 contributes to the Zn(2+) binding site. The 210-residue stretch at 267 to 476 (RQVELLLVAD…GHGNCLLDLP (210 aa)) folds into the Peptidase M12B domain. 8 cysteine pairs are disulfide-bonded: C342/C394, C371/C376, C388/C471, C426/C455, C497/C519, C508/C529, C514/C548, and C542/C553. Residue H410 participates in Zn(2+) binding. Residue E411 is part of the active site. H414 and H420 together coordinate Zn(2+). The Disintegrin domain maps to 485–566 (ELPGQTYDAT…TKKKYYSTSS (82 aa)). N498 carries N-linked (GlcNAc...) asparagine glycosylation. One can recognise a TSP type-1 1 domain in the interval 567–622 (HGNWGSWGSWGQCSRSCGGGVQFAYRHCNNPAPRNNGRYCTGKRAIYRSCSLMPCP). C-linked (Man) tryptophan glycans are attached at residues W570 and W573. Intrachain disulfides connect C579–C616, C583–C621, and C594–C606. The O-linked (Fuc...) serine glycan is linked to S582. N728, N802, and N807 each carry an N-linked (GlcNAc...) asparagine glycan. Residues 732-874 (TKIVGTFNKK…HGSNKVGSHT (143 aa)) are spacer. One can recognise a TSP type-1 2 domain in the interval 875–929 (SQPQWVTGPWLACSRTCDTGWHTRTVQCQDGNRKLAKGCPLSQRPSAFKQCLLKK).

The cofactor is Zn(2+). In terms of processing, the precursor is cleaved by furin and PCSK7 outside of the cell. Glycosylated. Can be O-fucosylated by POFUT2 on a serine or a threonine residue found within the consensus sequence C1-X(2)-(S/T)-C2-G of the TSP type-1 repeat domains where C1 and C2 are the first and second cysteine residue of the repeat, respectively. Fucosylated repeats can then be further glycosylated by the addition of a beta-1,3-glucose residue by the glucosyltransferase, B3GALTL. Fucosylation mediates the efficient secretion of ADAMTS family members. Can also be C-glycosylated with one or two mannose molecules on tryptophan residues within the consensus sequence W-X-X-W of the TPRs, and N-glycosylated. These other glycosylations can also facilitate secretion. Expressed at low level in placenta primarily but also detected in heart and brain, cervix, uterus, bladder, esophagus, rib cartilage, chondroblastoma, fibrous tissue and a joint capsule from an arthritic patient.

It is found in the secreted. The protein localises to the extracellular space. The protein resides in the extracellular matrix. Functionally, metalloproteinase that plays an important role in connective tissue organization, development, inflammation and cell migration. Extracellular matrix (ECM) degrading enzyme that show proteolytic activity toward the hyalectan group of chondroitin sulfate proteoglycans (CSPGs) including ACAN, VCAN, BCAN and NCAN. Cleavage within the hyalectans occurs at Glu-Xaa recognition motifs. Plays a role in embryonic development, including limb and cardiac morphogenesis, and skeletal muscle development through its VCAN remodeling properties. Cleaves VCAN in the pericellular matrix surrounding myoblasts, facilitating myoblast contact and fusion which is required for skeletal muscle development and regeneration. Participates in development of brown adipose tissue and browning of white adipose tissue. Plays an important role for T-lymphocyte migration from draining lymph nodes following viral infection. In Homo sapiens (Human), this protein is A disintegrin and metalloproteinase with thrombospondin motifs 5 (ADAMTS5).